A 20-amino-acid polypeptide reads, in one-letter code: Hemocyanin subunit Ia (20 aa).

Residues 1–20 (ADXQPGDSTDKLLAQKQDDV) form a disordered region.

The protein belongs to the tyrosinase family. Hemocyanin subfamily. In terms of assembly, composed of 3 major subunits (IB, II and III) and 1 minor subunit (IA) which form homohexamers and heterohexamers. May also form larger structures. Hemolymph.

It is found in the secreted. It localises to the extracellular space. Functionally, hemocyanins are copper-containing oxygen carriers occurring freely dissolved in the hemolymph of many mollusks and arthropods. The protein is Hemocyanin subunit Ia of Panulirus japonicus (Japanese spiny lobster).